The primary structure comprises 206 residues: Transmembrane emp24 domain-containing protein bai (206 aa).

The N-terminal stretch at 1–17 is a signal peptide; that stretch reads MAKATFFYFLFIGYVWP. The Lumenal portion of the chain corresponds to 18 to 172; the sequence is IDSVMFNLAP…RDTNEKTNSR (155 aa). Positions 30–140 constitute a GOLD domain; the sequence is QKCLKEDIQA…LKPLEVDLKR (111 aa). A helical transmembrane segment spans residues 173–193; it reads VLFFSIFSMCCLLGLATWQVL. Over 194 to 206 the chain is Cytoplasmic; the sequence is YLRRYFKAKKLIE.

The protein belongs to the EMP24/GP25L family.

The protein localises to the membrane. Functionally, eca and bai are essential, though not redundant, for dorsoventral patterning of the embryo. Specifically required during early embryogenesis for the activity of maternal tkv, while the zygotic tkv is not affected. This is Transmembrane emp24 domain-containing protein bai from Drosophila persimilis (Fruit fly).